The primary structure comprises 287 residues: Heterodimeric geranylgeranyl pyrophosphate synthase small subunit 2, chloroplastic (287 aa).

Residues Glu103 and Asp109 each coordinate Mg(2+). Dimethylallyl diphosphate-binding residues include Lys204, Gln241, and Lys250.

Belongs to the FPP/GGPP synthase family. Part of a heterodimeric geranyl(geranyl)diphosphate synthase. The cofactor is Mg(2+). As to expression, mainly expressed in trichomes, and, to a lower extent, in roots, leaves, flowers and stems.

The protein localises to the plastid. It localises to the chloroplast thylakoid membrane. Its function is as follows. Heterodimeric geranyl(geranyl)-diphosphate (GPP) synthase small subunit. The small subunit alone is inactive in vitro while the large subunit GGPPS1 catalyzes mainly the production of geranygeranyl-diphosphate in vitro. Upon association of the two subunits, the product profile changes and the production of gerany-diphosphate is strongly increased. The sequence is that of Heterodimeric geranylgeranyl pyrophosphate synthase small subunit 2, chloroplastic from Cannabis sativa (Hemp).